The sequence spans 143 residues: Transcriptional regulator MraZ (143 aa).

SpoVT-AbrB domains lie at 5 to 47 (THSP…PIRE) and 76 to 119 (ASNE…DAQT).

This sequence belongs to the MraZ family. As to quaternary structure, forms oligomers.

The protein resides in the cytoplasm. The protein localises to the nucleoid. The chain is Transcriptional regulator MraZ from Thermobifida fusca (strain YX).